We begin with the raw amino-acid sequence, 295 residues long: Mediator of RNA polymerase II transcription subunit 27 (295 aa).

It belongs to the Mediator complex subunit 27 family. As to quaternary structure, component of the Mediator complex.

The protein localises to the nucleus. Component of the Mediator complex, a coactivator involved in the regulated transcription of nearly all RNA polymerase II-dependent genes. Mediator functions as a bridge to convey information from gene-specific regulatory proteins to the basal RNA polymerase II transcription machinery. Mediator is recruited to promoters by direct interactions with regulatory proteins and serves as a scaffold for the assembly of a functional preinitiation complex with RNA polymerase II and the general transcription factors. The sequence is that of Mediator of RNA polymerase II transcription subunit 27 (MED27) from Aedes aegypti (Yellowfever mosquito).